Consider the following 386-residue polypeptide: TRIBOA-glucoside O-methyltransferase BX7 (386 aa).

Residues G224, D248, M270, and K283 each contribute to the S-adenosyl-L-methionine site. H287 acts as the Proton acceptor in catalysis.

The protein belongs to the class I-like SAM-binding methyltransferase superfamily. Cation-independent O-methyltransferase family. COMT subfamily. Expressed in seedlings and newly formed crown roots. Highest expression in the scutellar node. Low to non detectable levels in cob, tassel and mature organs like husk or leaves.

The enzyme catalyses TRIBOA beta-D-glucoside + S-adenosyl-L-methionine = DIMBOA beta-D-glucoside + S-adenosyl-L-homocysteine + H(+). In terms of biological role, O-methyltransferase involved in the benzoxazinoid glucoside biosynthesis. Can use 2,4,7-trihydroxy-2H-1,4-benzoxazin-3(4H)-one 2-D-glucoside (TRIBOA-glucoside) as substrate, but not aglucone TRIBOA, caffeic acid, ferulic acid, apigenin or quercetin. This is TRIBOA-glucoside O-methyltransferase BX7 (BX7) from Zea mays (Maize).